The primary structure comprises 312 residues: MINREDLLKNPVEDIALSDLEKYSDIVNVFDKIYGFSSEGIVRGSKILKEMIKDADLRFLSFTANLVSTGLRGLFADLVKRGYFNIIVTTGGTIDHDLARSFGGVYYKGSFDIDDAMLKDLEIHRLGNVLVPFESYGKVIEEIVRKFLPEIAKDKKEIPAYELLWEFGKRISDSNSILRAAYEKKVPVIVPGIVDGSFGTNLFIQSQFLNFKINLFEDMRLIKDLVFSCKKSGALIIGGGISKHHTIWWNQFKDGLDYAVYVTTAQEYDGSLSGAKPREAISWNKIRPNAKHATIYGDATIIVPILAASLLS.

Lysine 285 functions as the Nucleophile in the catalytic mechanism.

The protein belongs to the deoxyhypusine synthase family. The cofactor is NAD(+).

The enzyme catalyses [eIF5A protein]-L-lysine + spermidine = [eIF5A protein]-deoxyhypusine + propane-1,3-diamine. It functions in the pathway protein modification; eIF5A hypusination. Functionally, catalyzes the NAD-dependent oxidative cleavage of spermidine and the subsequent transfer of the butylamine moiety of spermidine to the epsilon-amino group of a specific lysine residue of the eIF-5A precursor protein to form the intermediate deoxyhypusine residue. The sequence is that of Probable deoxyhypusine synthase from Saccharolobus islandicus (strain Y.N.15.51 / Yellowstone #2) (Sulfolobus islandicus).